The primary structure comprises 521 residues: Glucose-1-phosphate adenylyltransferase small subunit, chloroplastic/amyloplastic (521 aa).

The tract at residues 1 to 32 (MAASIGALKSSPSSNNCINERRNDSTRAVSSR) is disordered. The N-terminal 72 residues, 1–72 (MAASIGALKS…RSPMIVSPKA (72 aa)), are a transit peptide targeting the chloroplast. Residue Lys268 coordinates substrate. Residues 444–454 (TDADRKLLAAK) are allosteric regulation.

The protein belongs to the bacterial/plant glucose-1-phosphate adenylyltransferase family. As to quaternary structure, heterotetramer. As to expression, leaves and tubers.

It is found in the plastid. The protein localises to the chloroplast. It localises to the amyloplast. The enzyme catalyses alpha-D-glucose 1-phosphate + ATP + H(+) = ADP-alpha-D-glucose + diphosphate. The protein operates within glycan biosynthesis; starch biosynthesis. With respect to regulation, activated by 3'phosphoglycerate, inhibited by orthophosphate. Allosteric regulation. Its function is as follows. This protein plays a role in synthesis of starch. It catalyzes the synthesis of the activated glycosyl donor, ADP-glucose from Glc-1-P and ATP. The polypeptide is Glucose-1-phosphate adenylyltransferase small subunit, chloroplastic/amyloplastic (Solanum tuberosum (Potato)).